A 343-amino-acid chain; its full sequence is Major histocompatibility complex class I-related protein 1 (343 aa).

The N-terminal stretch at 1–18 (MMFLLPFLTVFLAKQSHT) is a signal peptide. Residues 19-105 (RTHSLRYFRL…RHLQRHYNHS (87 aa)) form an alpha-1 region. Residues 19–197 (RTHSLRYFRL…EYGSDALERT (179 aa)) are antigen-binding cleft. The Extracellular segment spans residues 19-298 (RTHSLRYFRL…QESGNTLLVA (280 aa)). 8-(9H-purin-6-yl)-2-oxa-8-azabicyclo[3.3.1]nona-3,6-diene-4,6-dicarbaldehyde is bound by residues tyrosine 25 and arginine 27. Residues arginine 27, serine 42, and lysine 61 each coordinate 5-(2-oxoethylideneamino)-6-(D-ribitylamino)uracil. Residues arginine 27, serine 42, and lysine 61 each coordinate 5-(2-oxopropylideneamino)-6-(D-ribitylamino)uracil. 7-hydroxy-6-methyl-8-(1-D-ribityl)lumazine contacts are provided by arginine 27, serine 42, and lysine 61. Positions 61 and 76 each coordinate 8-(9H-purin-6-yl)-2-oxa-8-azabicyclo[3.3.1]nona-3,6-diene-4,6-dicarbaldehyde. Lysine 61 lines the 2-amino-4-oxopteridine-6-carbaldehyde pocket. Residue lysine 61 coordinates pyridoxal. N-linked (GlcNAc...) asparagine glycosylation occurs at asparagine 103. The alpha-2 stretch occupies residues 106-197 (GLHTYQRMIG…EYGSDALERT (92 aa)). Arginine 112 serves as a coordination point for 8-(9H-purin-6-yl)-2-oxa-8-azabicyclo[3.3.1]nona-3,6-diene-4,6-dicarbaldehyde. 5-(2-oxoethylideneamino)-6-(D-ribitylamino)uracil is bound by residues arginine 112, tyrosine 170, and glutamine 171. Arginine 112, tyrosine 170, and glutamine 171 together coordinate 5-(2-oxopropylideneamino)-6-(D-ribitylamino)uracil. Residues arginine 112, tyrosine 170, and glutamine 171 each contribute to the 7-hydroxy-6-methyl-8-(1-D-ribityl)lumazine site. 2 disulfides stabilise this stretch: cysteine 116-cysteine 179 and cysteine 218-cysteine 274. The interval 198–289 (EHPVVRTTRK…GLQMVLEAPQ (92 aa)) is alpha-3. One can recognise an Ig-like C1-type domain in the interval 200–302 (PVVRTTRKET…NTLLVANTIS (103 aa)). The interval 290–298 (ESGNTLLVA) is connecting peptide. Residues 299 to 319 (NTISGTIILIIVLAGVGALIW) traverse the membrane as a helical segment. The Cytoplasmic portion of the chain corresponds to 320-343 (RRRSREPKEVMYQPTQVNEGSSPS).

As to quaternary structure, heterotrimer that consists of MR1, B2M and metabolite antigen. Major classes of metabolite ligands presented by MR1 include riboflavin-related antigens, pyrimidines and ribityl lumazines, nucleobase adducts and folate derivatives. Forms reversible covalent Schiff base complexes with microbial pyrimidine-based metabolite, which serves as a molecular switch triggering complete folding, stable association with B2M and translocation of the ternary complex from endoplasmic reticulum to the plasma membrane. Alternatively, forms non-Schiff base complexes with ribityl lumazines. On antigen-presenting cells, the ternary complex interacts with TCR on MR1-restricted T cells. Interacts with TAPBP and TAPBPL chaperones in the endoplasmic reticulum. TAPBP associated or not with MHC class I peptide loading complex binds ligand-free MR1 or MR1-B2M complex, providing for stable MR1 pools ready for metabolite antigen processing. TAPBPL interacts with MR1 in a ligand-independent way; this interaction may stabilize MR1 pool and facilitate ligand loading and dissociation. Structurally, MR1-B2M heterodimer adopts a topology similar to classical MHC class I molecules, with alpha-1 and alpha-2 domains of MR1 forming the antigen-binding cleft composed of two alpha-helices resting on a floor of 7-stranded anti-parallel beta-pleated sheet. MR1-B2M heterodimer (via alpha-helices) interacts with TCR (via CDR domains). In terms of processing, N-glycosylated. Expressed in kidney, liver, testis, spleen, thymus, brain, and heart.

It localises to the cell membrane. Its subcellular location is the endoplasmic reticulum membrane. The protein resides in the golgi apparatus membrane. The protein localises to the early endosome membrane. It is found in the late endosome membrane. Its function is as follows. Antigen-presenting molecule specialized in displaying microbial pyrimidine-based metabolites to alpha-beta T cell receptors (TCR) on innate-type mucosal-associated invariant T (MAIT) cells. In complex with B2M preferentially presents riboflavin-derived metabolites to semi-invariant TCRs on MAIT cells, guiding immune surveillance of the microbial metabolome at mucosal epithelial barriers. Signature pyrimidine-based microbial antigens are generated via non-enzymatic condensation of metabolite intermediates of the riboflavin pathway with by-products arising from other metabolic pathways such as glycolysis. Typical potent antigenic metabolites are 5-(2-oxoethylideneamino)-6-D-ribitylaminouracil (5-OE-RU) and 5-(2-oxopropylideneamino)-6-D-ribitylaminouracil (5-OP-RU), products of condensation of 5-amino-6-D-ribityaminouracil (5-A-RU) with glyoxal or methylglyoxal by-products, respectively. May present microbial antigens to various MAIT cell subsets, providing for unique recognition of diverse microbes, including pathogens that do not synthesize riboflavin. Upon antigen recognition, elicits rapid innate-type MAIT cell activation to eliminate pathogenic microbes by directly killing infected cells. During T cell development, drives thymic selection and post-thymic terminal differentiation of MAIT cells in a process dependent on commensal microflora. Acts as an immune sensor of cancer cell metabolome. May present a tumor-specific or -associated metabolite essential for cancer cell survival to a pan-cancer TCR on a non-MAIT CD8-positive T cell clone, triggering T cell-mediated killing of a wide range of cancer cell types. May present tumor-enriched pyridoxal and pyridoxal 5'-phosphate antigens, enabling preferential recognition of cancer cells. Presents nucleobase carbonyl adducts generated during oxidative stress. Captures M3Ade, a nucleobase adduct composed of one adenine modified by a malondialdehyde trimer, for recognition by MR1-restricted T cell clones expressing a polyclonal TCR repertoire. The polypeptide is Major histocompatibility complex class I-related protein 1 (Rattus norvegicus (Rat)).